The following is a 263-amino-acid chain: 4-hydroxy-2-oxo-heptane-1,7-dioate aldolase (263 aa).

Histidine 45 (proton acceptor) is an active-site residue. Residue glutamine 147 coordinates substrate. Residue glutamate 149 coordinates a divalent metal cation. Residues alanine 174 and aspartate 175 each contribute to the substrate site. Aspartate 175 lines the a divalent metal cation pocket.

It belongs to the HpcH/HpaI aldolase family. Homohexamer; trimer of dimers. A divalent metal cation serves as cofactor.

It catalyses the reaction 4-hydroxy-2-oxoheptanedioate = succinate semialdehyde + pyruvate. It participates in aromatic compound metabolism; 4-hydroxyphenylacetate degradation; pyruvate and succinate semialdehyde from 4-hydroxyphenylacetate: step 7/7. Its function is as follows. Catalyzes the reversible retro-aldol cleavage of 4-hydroxy-2-ketoheptane-1,7-dioate (HKHD) to pyruvate and succinic semialdehyde. This is 4-hydroxy-2-oxo-heptane-1,7-dioate aldolase from Salmonella paratyphi A (strain ATCC 9150 / SARB42).